Consider the following 81-residue polypeptide: LYR motif-containing protein 4 (81 aa).

It belongs to the complex I LYR family.

It is found in the mitochondrion. It localises to the nucleus. Its pathway is cofactor biosynthesis; iron-sulfur cluster biosynthesis. Functionally, required for nuclear and mitochondrial iron-sulfur protein biosynthesis. This Dictyostelium discoideum (Social amoeba) protein is LYR motif-containing protein 4 (lyrm4).